Reading from the N-terminus, the 333-residue chain is Testin-2 (333 aa).

Residues 1–17 (MIAVLFLAILCLEIDST) form the signal peptide. 3 disulfide bridges follow: C135-C178, C169-C211, and C269-C322. The N-linked (GlcNAc...) asparagine glycan is linked to N173. Active-site residues include H276 and N300.

This sequence belongs to the peptidase C1 family. Expressed in testis and ovary. Low level in spleen, epididymis, kidney, and uterus. Expressed in primary cultures of Sertoli cells.

The protein localises to the secreted. The protein is Testin-2 of Mus musculus (Mouse).